We begin with the raw amino-acid sequence, 312 residues long: Homoserine O-acetyltransferase (312 aa).

Catalysis depends on C142, which acts as the Acyl-thioester intermediate. Substrate is bound by residues K163 and S192. Residue H235 is the Proton acceptor of the active site. Residue E237 is part of the active site. R249 lines the substrate pocket.

Belongs to the MetA family.

The protein resides in the cytoplasm. It catalyses the reaction L-homoserine + acetyl-CoA = O-acetyl-L-homoserine + CoA. The protein operates within amino-acid biosynthesis; L-methionine biosynthesis via de novo pathway; O-acetyl-L-homoserine from L-homoserine: step 1/1. Transfers an acetyl group from acetyl-CoA to L-homoserine, forming acetyl-L-homoserine. The polypeptide is Homoserine O-acetyltransferase (Ruegeria pomeroyi (strain ATCC 700808 / DSM 15171 / DSS-3) (Silicibacter pomeroyi)).